A 40-amino-acid polypeptide reads, in one-letter code: Large ribosomal subunit protein bL36B (40 aa).

It belongs to the bacterial ribosomal protein bL36 family.

This is Large ribosomal subunit protein bL36B from Leifsonia xyli subsp. xyli (strain CTCB07).